Reading from the N-terminus, the 419-residue chain is MTTQLEQAWELAKQRFAAVGIDVEEALRQLDRLPVSMHCWQGDDVAGFENPEGSLTGGIQSTGNYPGKARNATELRADLEQALRLIPGPKRLNLHAIYLESDTPVARDQIKPEHFKNWVEWAKANRLGLDFNPTCFSHPLSADGFTLSHPDAKIRQFWIDHCKASRRVSAYFGEQLGTPSVMNIWIPDGMKDITVDRLAPRQRLLEALDEVISEKFDPAHHIDAVESKLFGIGAESYTVGSNEFYMGYATSRQTALCLDAGHFHPTEVISDKISAAMLYVPRLLLHVSRPVRWDSDHVVLLDDETQAIASEIVRHNLFDRVHIGLDFFDASINRVAAWVIGTRNMKKALLRALLEPTDQLRQLEASGDYTARLALLEEQKSLPWQAVWEMYCQRHDTPAGSQWLDSVRAYEKEILSKRS.

Mn(2+) contacts are provided by H262, D294, and D296.

The protein belongs to the rhamnose isomerase family. As to quaternary structure, homotetramer. Mn(2+) is required as a cofactor.

Its subcellular location is the cytoplasm. The catalysed reaction is L-rhamnopyranose = L-rhamnulose. It functions in the pathway carbohydrate degradation; L-rhamnose degradation; glycerone phosphate from L-rhamnose: step 1/3. In terms of biological role, catalyzes the interconversion of L-rhamnose and L-rhamnulose. This chain is L-rhamnose isomerase, found in Salmonella paratyphi A (strain AKU_12601).